A 476-amino-acid polypeptide reads, in one-letter code: Cysteine--tRNA ligase (476 aa).

C31 contacts Zn(2+). Positions 33 to 43 match the 'HIGH' region motif; the sequence is PTVYNYAHIGN. C211, H236, and E240 together coordinate Zn(2+). Positions 269-273 match the 'KMSKS' region motif; the sequence is KMSKS. ATP is bound at residue K272.

It belongs to the class-I aminoacyl-tRNA synthetase family. Monomer. Zn(2+) is required as a cofactor.

The protein localises to the cytoplasm. The enzyme catalyses tRNA(Cys) + L-cysteine + ATP = L-cysteinyl-tRNA(Cys) + AMP + diphosphate. The polypeptide is Cysteine--tRNA ligase (Xanthomonas axonopodis pv. citri (strain 306)).